A 192-amino-acid polypeptide reads, in one-letter code: Thymidine kinase (192 aa).

Residues 9–16 and 87–90 contribute to the ATP site; these read SSMNAGKS and DEAQ. Catalysis depends on Glu-88, which acts as the Proton acceptor. Zn(2+) is bound by residues Cys-145, Cys-147, Cys-182, and His-185.

Belongs to the thymidine kinase family. As to quaternary structure, homotetramer.

The protein resides in the cytoplasm. It catalyses the reaction thymidine + ATP = dTMP + ADP + H(+). The polypeptide is Thymidine kinase (Colwellia psychrerythraea (strain 34H / ATCC BAA-681) (Vibrio psychroerythus)).